The following is a 207-amino-acid chain: dTTP/UTP pyrophosphatase (207 aa).

Asp79 serves as the catalytic Proton acceptor.

Belongs to the Maf family. YhdE subfamily. A divalent metal cation serves as cofactor.

The protein resides in the cytoplasm. It catalyses the reaction dTTP + H2O = dTMP + diphosphate + H(+). The catalysed reaction is UTP + H2O = UMP + diphosphate + H(+). In terms of biological role, nucleoside triphosphate pyrophosphatase that hydrolyzes dTTP and UTP. May have a dual role in cell division arrest and in preventing the incorporation of modified nucleotides into cellular nucleic acids. The polypeptide is dTTP/UTP pyrophosphatase (Nitrobacter hamburgensis (strain DSM 10229 / NCIMB 13809 / X14)).